The sequence spans 250 residues: Ubiquinone/menaquinone biosynthesis C-methyltransferase UbiE (250 aa).

S-adenosyl-L-methionine contacts are provided by residues Thr73, Asp94, 122–123 (NS), and Ser139.

It belongs to the class I-like SAM-binding methyltransferase superfamily. MenG/UbiE family.

The enzyme catalyses a 2-demethylmenaquinol + S-adenosyl-L-methionine = a menaquinol + S-adenosyl-L-homocysteine + H(+). It catalyses the reaction a 2-methoxy-6-(all-trans-polyprenyl)benzene-1,4-diol + S-adenosyl-L-methionine = a 5-methoxy-2-methyl-3-(all-trans-polyprenyl)benzene-1,4-diol + S-adenosyl-L-homocysteine + H(+). Its pathway is quinol/quinone metabolism; menaquinone biosynthesis; menaquinol from 1,4-dihydroxy-2-naphthoate: step 2/2. It participates in cofactor biosynthesis; ubiquinone biosynthesis. Functionally, methyltransferase required for the conversion of demethylmenaquinol (DMKH2) to menaquinol (MKH2) and the conversion of 2-polyprenyl-6-methoxy-1,4-benzoquinol (DDMQH2) to 2-polyprenyl-3-methyl-6-methoxy-1,4-benzoquinol (DMQH2). The chain is Ubiquinone/menaquinone biosynthesis C-methyltransferase UbiE from Wigglesworthia glossinidia brevipalpis.